We begin with the raw amino-acid sequence, 283 residues long: MQIVHSIADLRAILSSKGRPAFVPTMGNLHDGHLSLVRAARQHGDIAVASIFVNRLQFLPHEDFDSYPRTWEADCAKLEAEGCDLLFAPREADLYPEPQTFKIQPDAQLADILEGHFRPGFFTGVCTVVMKLFSAVFFASGGGTAVFGKKDYQQLMVIRRMVEQFALPVNIVAGDTARADDGLALSSRNGYLSDDERQQAMALSLALKQLADAARAGQAPLAELEAWAMQSLAAQGWEPDYLTVRLRRDLQPPAEGAQLAGAPLVALGAARLGKTRLIDNLEF.

26-33 contacts ATP; the sequence is MGNLHDGH. Catalysis depends on H33, which acts as the Proton donor. Residue Q57 coordinates (R)-pantoate. Residue Q57 coordinates beta-alanine. 148–151 provides a ligand contact to ATP; sequence GKKD. Q154 contacts (R)-pantoate. ATP-binding positions include A177 and 185 to 188; that span reads LSSR.

Belongs to the pantothenate synthetase family. Homodimer.

The protein resides in the cytoplasm. The enzyme catalyses (R)-pantoate + beta-alanine + ATP = (R)-pantothenate + AMP + diphosphate + H(+). It participates in cofactor biosynthesis; (R)-pantothenate biosynthesis; (R)-pantothenate from (R)-pantoate and beta-alanine: step 1/1. Catalyzes the condensation of pantoate with beta-alanine in an ATP-dependent reaction via a pantoyl-adenylate intermediate. The protein is Pantothenate synthetase of Delftia acidovorans (strain DSM 14801 / SPH-1).